The chain runs to 421 residues: Putative hydro-lyase KRH_21160 (421 aa).

Disordered stretches follow at residues 200 to 298 (TWGH…SPVT) and 312 to 421 (TRAG…AVSR). The span at 224–237 (GSRRRPRWWSRLRR) shows a compositional bias: basic residues. Composition is skewed to low complexity over residues 243-260 (PRATCSSPTPGTPTTRCP) and 370-380 (SRGPGPCPRAA).

Belongs to the D-glutamate cyclase family.

The polypeptide is Putative hydro-lyase KRH_21160 (Kocuria rhizophila (strain ATCC 9341 / DSM 348 / NBRC 103217 / DC2201)).